We begin with the raw amino-acid sequence, 1153 residues long: Myosin-3 (1153 aa).

A Myosin N-terminal SH3-like domain is found at 104 to 153 (KKVLQFWVQLPNGNWELGKIMSTSGEESVIVVTEGKVLKVKSETLVPANP). Residues 157 to 829 (DGVDDLMQLS…QIGVLEDTRN (673 aa)) enclose the Myosin motor domain. ATP is bound by residues 248–255 (GESGAGKT) and 296–304 (NDNSSRFGK). Actin-binding stretches follow at residues 581–615 (LFEKKPLGLLSLLDEESTFPNGTDLTLANKLKQHL) and 709–731 (LFQLMQRLGNTTPHFIRCIKPNN). 3 consecutive IQ domains span residues 831-860 (TLHGILRLQSYFRGHQARCRLKELKTGITI), 854-883 (LKTGITILQSFVRGEKMRKEYTELLQRHRA), and 903-932 (TVDASAVIQSAIRGELVRRCAGDIGWLSSG). The stretch at 948 to 996 (YLSDLQRRVLRTEAALREKEEENDILRQRVQQYDNRWSEYETKMKSMEE) forms a coiled coil. Residues 1020 to 1050 (DSARNSDASVNASDATDLDSGGSHYQMGHGR) are disordered. The segment covering 1024 to 1033 (NSDASVNASD) has biased composition (polar residues).

Belongs to the TRAFAC class myosin-kinesin ATPase superfamily. Myosin family. Plant myosin class VIII subfamily. In terms of assembly, homodimer.

Its function is as follows. Myosin heavy chain that is required for the cell cycle-regulated transport of various organelles and proteins for their segregation. Functions by binding with its tail domain to receptor proteins on organelles and exerting force with its N-terminal motor domain against actin filaments, thereby transporting its cargo along polarized actin cables. This is Myosin-3 (VIII-A) from Arabidopsis thaliana (Mouse-ear cress).